The chain runs to 193 residues: Putative manganese efflux pump MntP (193 aa).

A run of 6 helical transmembrane segments spans residues 6-26, 48-68, 71-91, 108-128, 132-152, and 165-185; these read VIFIALGLSADCFAVSIGIAC, AGMVVIGFFAGLSVIDIISAF, WIAFGLLLFIGVRMIYEALQG, LLGVAVATSIDALAVGLAFAV, NIGLAALLIGLVSLTVSFLGF, and WVGVAGGLVLVFIGLKILAEH.

It belongs to the MntP (TC 9.B.29) family.

Its subcellular location is the cell membrane. Probably functions as a manganese efflux pump. The chain is Putative manganese efflux pump MntP from Dehalococcoides mccartyi (strain ATCC BAA-2100 / JCM 16839 / KCTC 5957 / BAV1).